Consider the following 119-residue polypeptide: MAMLLGASVLILWLQPDWVNSQQKNDDQQVKQNSPSLSVQEGRISILNCDYTNSMFDYFLWYKKYPAEGPTFLISISSIKDKNEDGRFTVFLNKSAKHLSLHIVPSQPGDSAVYFCAAS.

A signal peptide spans 1-21 (MAMLLGASVLILWLQPDWVNS). The Ig-like domain maps to 22-119 (QQKNDDQQVK…DSAVYFCAAS (98 aa)). A disulfide bond links Cys49 and Cys116. Asn93 carries N-linked (GlcNAc...) asparagine glycosylation.

As to quaternary structure, alpha-beta TR is a heterodimer composed of an alpha and beta chain; disulfide-linked. The alpha-beta TR is associated with the transmembrane signaling CD3 coreceptor proteins to form the TR-CD3 (TcR or TCR). The assembly of alpha-beta TR heterodimers with CD3 occurs in the endoplasmic reticulum where a single alpha-beta TR heterodimer associates with one CD3D-CD3E heterodimer, one CD3G-CD3E heterodimer and one CD247 homodimer forming a stable octameric structure. CD3D-CD3E and CD3G-CD3E heterodimers preferentially associate with TR alpha and TR beta chains, respectively. The association of the CD247 homodimer is the last step of TcR assembly in the endoplasmic reticulum and is required for transport to the cell surface.

Its subcellular location is the cell membrane. Functionally, v region of the variable domain of T cell receptor (TR) alpha chain that participates in the antigen recognition. Alpha-beta T cell receptors are antigen specific receptors which are essential to the immune response and are present on the cell surface of T lymphocytes. Recognize peptide-major histocompatibility (MH) (pMH) complexes that are displayed by antigen presenting cells (APC), a prerequisite for efficient T cell adaptive immunity against pathogens. Binding of alpha-beta TR to pMH complex initiates TR-CD3 clustering on the cell surface and intracellular activation of LCK that phosphorylates the ITAM motifs of CD3G, CD3D, CD3E and CD247 enabling the recruitment of ZAP70. In turn ZAP70 phosphorylates LAT, which recruits numerous signaling molecules to form the LAT signalosome. The LAT signalosome propagates signal branching to three major signaling pathways, the calcium, the mitogen-activated protein kinase (MAPK) kinase and the nuclear factor NF-kappa-B (NF-kB) pathways, leading to the mobilization of transcription factors that are critical for gene expression and essential for T cell growth and differentiation. The T cell repertoire is generated in the thymus, by V-(D)-J rearrangement. This repertoire is then shaped by intrathymic selection events to generate a peripheral T cell pool of self-MH restricted, non-autoaggressive T cells. Post-thymic interaction of alpha-beta TR with the pMH complexes shapes TR structural and functional avidity. The chain is T cell receptor alpha variable 29/delta variable 5 from Homo sapiens (Human).